The sequence spans 398 residues: Succinyl-diaminopimelate desuccinylase (398 aa).

A Zn(2+)-binding site is contributed by histidine 68. The active site involves aspartate 70. Position 101 (aspartate 101) interacts with Zn(2+). Catalysis depends on glutamate 135, which acts as the Proton acceptor. Positions 136, 164, and 349 each coordinate Zn(2+).

It belongs to the peptidase M20A family. DapE subfamily. In terms of assembly, homodimer. The cofactor is Zn(2+). It depends on Co(2+) as a cofactor.

The enzyme catalyses N-succinyl-(2S,6S)-2,6-diaminopimelate + H2O = (2S,6S)-2,6-diaminopimelate + succinate. It functions in the pathway amino-acid biosynthesis; L-lysine biosynthesis via DAP pathway; LL-2,6-diaminopimelate from (S)-tetrahydrodipicolinate (succinylase route): step 3/3. In terms of biological role, catalyzes the hydrolysis of N-succinyl-L,L-diaminopimelic acid (SDAP), forming succinate and LL-2,6-diaminopimelate (DAP), an intermediate involved in the bacterial biosynthesis of lysine and meso-diaminopimelic acid, an essential component of bacterial cell walls. This is Succinyl-diaminopimelate desuccinylase from Wolbachia pipientis subsp. Culex pipiens (strain wPip).